The following is a 350-amino-acid chain: MSKNKLSKGQQRRVNANHQRRLKTSKEKPDYDDNLFGEPDEGIVISRFGMHADVESADGDVHRCNIRRTIRSLVTGDRVVWRPGKPAAEGVNVKGIVEAVHERTSVLTRPDFYDGVKPIAANIDQIVIVSAILPELSLNIIDRYLVACETLQIEPIIVLNKIDLLDDEGMEFVNEQMDIYRNIGYRVLMVSSHTQDGLKPLEEALTGRISIFAGQSGVGKSSLLNALLGLQKEILTNDVSDNSGLGQHTTTAARLYHFPHGGDVIDSPGVREFGLWHLEPEQITQGFVEFHDYLGLCKYRDCKHDTDPGCAIREAVEEGKIAETRFENYHRILESMAQVKTRKNFSDTDD.

Residues 1–17 (MSKNKLSKGQQRRVNAN) show a composition bias toward polar residues. The tract at residues 1-33 (MSKNKLSKGQQRRVNANHQRRLKTSKEKPDYDD) is disordered. Residues 104–273 (TSVLTRPDFY…VIDSPGVREF (170 aa)) form the CP-type G domain. Residues 160-163 (NKID) and 214-222 (GQSGVGKSS) contribute to the GTP site. 4 residues coordinate Zn(2+): C297, C302, H304, and C310.

Belongs to the TRAFAC class YlqF/YawG GTPase family. RsgA subfamily. In terms of assembly, monomer. Associates with 30S ribosomal subunit, binds 16S rRNA. It depends on Zn(2+) as a cofactor.

The protein resides in the cytoplasm. In terms of biological role, one of several proteins that assist in the late maturation steps of the functional core of the 30S ribosomal subunit. Helps release RbfA from mature subunits. May play a role in the assembly of ribosomal proteins into the subunit. Circularly permuted GTPase that catalyzes slow GTP hydrolysis, GTPase activity is stimulated by the 30S ribosomal subunit. The chain is Small ribosomal subunit biogenesis GTPase RsgA from Escherichia coli O6:H1 (strain CFT073 / ATCC 700928 / UPEC).